Consider the following 24-residue polypeptide: Humanin-like 7 (24 aa).

Belongs to the humanin family. Expressed in testis.

The protein localises to the secreted. It is found in the cytoplasm. Functionally, plays a role as a neuroprotective and antiapoptotic factor. The polypeptide is Humanin-like 7 (Homo sapiens (Human)).